Consider the following 828-residue polypeptide: Periplasmic nitrate reductase (828 aa).

The tat-type signal signal peptide spans 1 to 31; the sequence is MKLSRRSFMKANAVAAAAAAAGLSVPGVARA. In terms of domain architecture, 4Fe-4S Mo/W bis-MGD-type spans 39–95; it reads IKWDKAPCRFCGTGCGVLVGTQQGRVVACQGDPDAPVNRGLNCIKGYFLPKIMYGKD. Residues C46, C49, C53, and C81 each coordinate [4Fe-4S] cluster. Mo-bis(molybdopterin guanine dinucleotide) is bound by residues K83, Q150, N175, C179, 212–219, 243–247, 262–264, M372, Q376, N482, 508–509, K531, D558, and 718–727; these read WGANMAEM, STYQH, QSD, SD, and TGRVLEHWHT. F794 provides a ligand contact to substrate. Mo-bis(molybdopterin guanine dinucleotide) contacts are provided by N802 and K819.

This sequence belongs to the prokaryotic molybdopterin-containing oxidoreductase family. NasA/NapA/NarB subfamily. As to quaternary structure, component of the periplasmic nitrate reductase NapAB complex composed of NapA and NapB. It depends on [4Fe-4S] cluster as a cofactor. Mo-bis(molybdopterin guanine dinucleotide) serves as cofactor. In terms of processing, predicted to be exported by the Tat system. The position of the signal peptide cleavage has not been experimentally proven.

It is found in the periplasm. It catalyses the reaction 2 Fe(II)-[cytochrome] + nitrate + 2 H(+) = 2 Fe(III)-[cytochrome] + nitrite + H2O. In terms of biological role, catalytic subunit of the periplasmic nitrate reductase complex NapAB. Receives electrons from NapB and catalyzes the reduction of nitrate to nitrite. This Shigella boydii serotype 18 (strain CDC 3083-94 / BS512) protein is Periplasmic nitrate reductase.